We begin with the raw amino-acid sequence, 657 residues long: Translation factor GUF1, mitochondrial (657 aa).

The transit peptide at 1–39 (MRGCLQSVKWLTSALRPSQSLASSTRYPRRLLSTSAPRN) directs the protein to the mitochondrion. The region spanning 59-239 (ERFRNFCIVA…TVIEQIPAPV (181 aa)) is the tr-type G domain. GTP-binding positions include 68–75 (AHVDHGKS), 132–136 (DTPGH), and 186–189 (NKVD).

It belongs to the TRAFAC class translation factor GTPase superfamily. Classic translation factor GTPase family. LepA subfamily.

It is found in the mitochondrion inner membrane. It carries out the reaction GTP + H2O = GDP + phosphate + H(+). Functionally, promotes mitochondrial protein synthesis. May act as a fidelity factor of the translation reaction, by catalyzing a one-codon backward translocation of tRNAs on improperly translocated ribosomes. Binds to mitochondrial ribosomes in a GTP-dependent manner. This is Translation factor GUF1, mitochondrial from Ajellomyces capsulatus (strain G186AR / H82 / ATCC MYA-2454 / RMSCC 2432) (Darling's disease fungus).